Reading from the N-terminus, the 365-residue chain is Quinone oxidoreductase-like protein 2 homolog (365 aa).

It belongs to the zinc-containing alcohol dehydrogenase family. Quinone oxidoreductase subfamily.

This chain is Quinone oxidoreductase-like protein 2 homolog, found in Nematostella vectensis (Starlet sea anemone).